The sequence spans 309 residues: Lipoyl synthase (309 aa).

Positions 37, 42, 48, 67, 71, 74, and 281 each coordinate [4Fe-4S] cluster. The Radical SAM core domain occupies 53-270 (DGPGTATFML…RVAETEFGFL (218 aa)).

This sequence belongs to the radical SAM superfamily. Lipoyl synthase family. The cofactor is [4Fe-4S] cluster.

The protein resides in the cytoplasm. It carries out the reaction [[Fe-S] cluster scaffold protein carrying a second [4Fe-4S](2+) cluster] + N(6)-octanoyl-L-lysyl-[protein] + 2 oxidized [2Fe-2S]-[ferredoxin] + 2 S-adenosyl-L-methionine + 4 H(+) = [[Fe-S] cluster scaffold protein] + N(6)-[(R)-dihydrolipoyl]-L-lysyl-[protein] + 4 Fe(3+) + 2 hydrogen sulfide + 2 5'-deoxyadenosine + 2 L-methionine + 2 reduced [2Fe-2S]-[ferredoxin]. It functions in the pathway protein modification; protein lipoylation via endogenous pathway; protein N(6)-(lipoyl)lysine from octanoyl-[acyl-carrier-protein]: step 2/2. Its function is as follows. Catalyzes the radical-mediated insertion of two sulfur atoms into the C-6 and C-8 positions of the octanoyl moiety bound to the lipoyl domains of lipoate-dependent enzymes, thereby converting the octanoylated domains into lipoylated derivatives. The polypeptide is Lipoyl synthase (Natronomonas pharaonis (strain ATCC 35678 / DSM 2160 / CIP 103997 / JCM 8858 / NBRC 14720 / NCIMB 2260 / Gabara) (Halobacterium pharaonis)).